The sequence spans 104 residues: Large ribosomal subunit protein uL24 (104 aa).

Belongs to the universal ribosomal protein uL24 family. In terms of assembly, part of the 50S ribosomal subunit.

One of two assembly initiator proteins, it binds directly to the 5'-end of the 23S rRNA, where it nucleates assembly of the 50S subunit. Its function is as follows. One of the proteins that surrounds the polypeptide exit tunnel on the outside of the subunit. This chain is Large ribosomal subunit protein uL24, found in Pseudomonas fluorescens (strain ATCC BAA-477 / NRRL B-23932 / Pf-5).